The chain runs to 101 residues: Protein translation factor SUI1 homolog (101 aa).

It belongs to the SUI1 family.

The polypeptide is Protein translation factor SUI1 homolog (Methanothermobacter thermautotrophicus (strain ATCC 29096 / DSM 1053 / JCM 10044 / NBRC 100330 / Delta H) (Methanobacterium thermoautotrophicum)).